The sequence spans 141 residues: Hemoglobin subunit alpha (141 aa).

Positions 1–141 constitute a Globin domain; that stretch reads VLSPADKANI…VSTVLTSKYR (141 aa). At S3 the chain carries Phosphoserine. N6-succinyllysine is present on residues K7 and K11. K16 is modified (N6-acetyllysine; alternate). An N6-succinyllysine; alternate modification is found at K16. A Phosphotyrosine modification is found at Y24. A Phosphoserine modification is found at S35. K40 is modified (N6-succinyllysine). Residue S49 is modified to Phosphoserine. Position 58 (H58) interacts with O2. H87 lines the heme b pocket. Residue S102 is modified to Phosphoserine. T108 carries the phosphothreonine modification. A phosphoserine mark is found at S124 and S131. T134 and T137 each carry phosphothreonine. S138 is modified (phosphoserine).

This sequence belongs to the globin family. In terms of assembly, heterotetramer of two alpha chains and two beta chains. Red blood cells.

In terms of biological role, involved in oxygen transport from the lung to the various peripheral tissues. Its function is as follows. Hemopressin acts as an antagonist peptide of the cannabinoid receptor CNR1. Hemopressin-binding efficiently blocks cannabinoid receptor CNR1 and subsequent signaling. This is Hemoglobin subunit alpha (HBA) from Meles meles (Eurasian badger).